We begin with the raw amino-acid sequence, 1614 residues long: Adenylate cyclase type 10 (1614 aa).

Guanylate cyclase domains are found at residues 42–179 and 293–418; these read VLMF…RLAQ and TIVF…ARMM. Residues D47 and I48 each coordinate Mg(2+). An ATP-binding site is contributed by 47 to 52; the sequence is DISGFT. Hydrogencarbonate is bound at residue K95. A Mg(2+)-binding site is contributed by D99. D99 and K144 together coordinate ATP. Hydrogencarbonate-binding residues include V167, R176, and M337. ATP-binding positions include V406 and 412-416; that span reads NIAAR.

The protein belongs to the adenylyl cyclase class-4/guanylyl cyclase family. It depends on Mg(2+) as a cofactor. Mn(2+) is required as a cofactor. Expressed in testis.

The protein localises to the cell membrane. Its subcellular location is the cytoplasm. It is found in the cytoskeleton. It localises to the perinuclear region. The protein resides in the nucleus. The protein localises to the cell projection. Its subcellular location is the cilium. It is found in the mitochondrion. It carries out the reaction ATP = 3',5'-cyclic AMP + diphosphate. Activated by manganese or magnesium ions. In the presence of magnesium ions, the enzyme is activated by bicarbonate. Calcium mildly increases the enzyme activity, also in the presence of magnesium ions. In terms of biological role, catalyzes the formation of the signaling molecule cAMP. May function as sensor that mediates responses to changes in cellular bicarbonate and CO(2) levels. Has a critical role in mammalian spermatogenesis by producing the cAMP which regulates cAMP-responsive nuclear factors indispensable for sperm maturation in the epididymis. Induces capacitation, the maturational process that sperm undergo prior to fertilization. Involved in ciliary beat regulation. The polypeptide is Adenylate cyclase type 10 (Adcy10) (Mus musculus (Mouse)).